Here is a 131-residue protein sequence, read N- to C-terminus: MDKKTIYFICTGNSCRSQMAEGWGREILGEDWNVYSAGIETHGVNPKAIEAMKEVDIDISNHTSDLIDNHILKQSDLVVTLCSDADDNCPILPPNVKKEHWGLEDPAGKEWSEFQRVRDEIKLAIENFKLR.

Residues cysteine 10, cysteine 82, and cysteine 89 each act as nucleophile in the active site. Intrachain disulfides connect cysteine 10-cysteine 82 and cysteine 82-cysteine 89.

Belongs to the low molecular weight phosphotyrosine protein phosphatase family. Thioredoxin-coupled ArsC subfamily.

The protein resides in the cytoplasm. The catalysed reaction is arsenate + [thioredoxin]-dithiol + H(+) = arsenite + [thioredoxin]-disulfide + H2O. In terms of biological role, catalyzes the reduction of arsenate [As(V)] to arsenite [As(III)]. This Staphylococcus xylosus protein is Arsenate reductase.